The primary structure comprises 556 residues: Sesquiterpene synthase 2 (556 aa).

Residues aspartate 309, aspartate 313, aspartate 453, and glutamate 461 each contribute to the Mg(2+) site. The DDXXD motif signature appears at 309–313; it reads DDIYD.

The protein belongs to the terpene synthase family. Tpsa subfamily. Requires Mg(2+) as cofactor. Mn(2+) is required as a cofactor. In terms of tissue distribution, mostly expressed in roots and mature leaflets and, to a lower extent, in rachis and developing leaflets.

The enzyme catalyses (2E,6E)-farnesyl diphosphate = alpha-humulene + diphosphate. The catalysed reaction is (2E,6E)-farnesyl diphosphate = alpha-selinene + diphosphate. It catalyses the reaction (2E,6E)-farnesyl diphosphate = delta-cadinene + diphosphate. It carries out the reaction (2E,6E)-farnesyl diphosphate = (1S,2S,4R)-beta-elemene + diphosphate. It participates in secondary metabolite biosynthesis; terpenoid biosynthesis. Its function is as follows. Sesquiterpene synthase involved in the biosynthesis of volatile compounds known for their medicinal efficacy for treating enteritis, dysentery, itch and some cancers. Mediates the conversion of (2E,6E)-farnesyl diphosphate (FPP) into beta-elemene, alpha-humulene, delta-cadinene and alpha-selinene. This is Sesquiterpene synthase 2 from Toona sinensis (Chinese mahogany).